The sequence spans 196 residues: 7-methyl-GTP pyrophosphatase (196 aa).

Residue Asp72 is the Proton acceptor of the active site.

Belongs to the Maf family. YceF subfamily. It depends on a divalent metal cation as a cofactor.

The protein localises to the cytoplasm. The catalysed reaction is N(7)-methyl-GTP + H2O = N(7)-methyl-GMP + diphosphate + H(+). Its function is as follows. Nucleoside triphosphate pyrophosphatase that hydrolyzes 7-methyl-GTP (m(7)GTP). May have a dual role in cell division arrest and in preventing the incorporation of modified nucleotides into cellular nucleic acids. This Neisseria gonorrhoeae (strain ATCC 700825 / FA 1090) protein is 7-methyl-GTP pyrophosphatase.